Here is a 1326-residue protein sequence, read N- to C-terminus: F-box/WD repeat-containing protein 7 (1326 aa).

Disordered stretches follow at residues 1 to 58 (MERG…AEVG), 123 to 187 (DSSS…IEDE), 318 to 351 (TVSN…ALSR), 399 to 549 (GSKA…SGCS), 615 to 642 (RSNP…RNGS), and 797 to 843 (TPRS…NPPP). Positions 9–39 (SSESVTSAGERTQSAVTSSTSTWVKSQASTS) are enriched in polar residues. The segment covering 165–187 (NDDDDDEEPEPEEDDEEELIEDE) has biased composition (acidic residues). Residues 320-348 (SNPSPAASANAAAPEEASTSNSSSTSSSA) show a composition bias toward low complexity. Residues 403 to 464 (ANGSGTANSD…KLNLGSSLGA (62 aa)) are compositionally biased toward polar residues. The segment covering 465–486 (SSCSQHRSGSSSTSKSMESSTS) has biased composition (low complexity). Polar residues predominate over residues 495–504 (VYTNTNSNDY). 3 stretches are compositionally biased toward low complexity: residues 510-520 (TTSGSSTSGGS), 528-546 (NVSA…SQES), and 616-631 (SNPP…GANP). Composition is skewed to polar residues over residues 632–642 (TASVRQRRNGS) and 797–824 (TPRS…STPG). Thr813 carries the post-translational modification Phosphothreonine. Ser825 bears the Phosphoserine mark. The F-box domain occupies 889 to 935 (RDFISLLPRELALFVLSYLEPKDLLRAAQTCRSWRFLCDDNLLWKEK). WD repeat units lie at residues 992 to 1030 (GHDD…CLRT), 1033 to 1070 (GHTG…CVHT), 1073 to 1110 (GHTS…CLHV), 1113 to 1150 (GHLA…CLHT), 1153 to 1190 (GHTN…CKHT), 1193 to 1232 (GHQS…QTLS), and 1236 to 1273 (KHHS…FIRN).

As to quaternary structure, part of a SCF E3 ubiquitin-protein ligase complex. Interacts with Myc and puf. Interacts with CycE. In terms of tissue distribution, expressed in follicle cell epithelium and imaginal disks, particularly in the morphogenetic furrow.

It is found in the nucleus. The protein operates within protein modification; protein ubiquitination. Its function is as follows. Substrate recognition component of a SCF (SKP1-CUL1-F-box protein) E3 ubiquitin-protein ligase complex which mediates the ubiquitination and subsequent proteasomal degradation of target proteins. Probably recognizes and binds to phosphorylated target proteins. In the wing and eye, negatively regulates cell growth and proliferation by mediating the degradation of Myc and cyclin E, respectively. Required for endocycles, but not mitosis in follicle cell epithelium. The protein is F-box/WD repeat-containing protein 7 of Drosophila melanogaster (Fruit fly).